Consider the following 932-residue polypeptide: Progesterone receptor (932 aa).

An AF3; mediates transcriptional activation region spans residues 1–164; sequence MTELKAKGPR…PATQGVLSPL (164 aa). The tract at residues 1 to 254 is disordered; it reads MTELKAKGPR…GGAAAGGAAA (254 aa). The tract at residues 1 to 565 is modulating, Pro-Rich; it reads MTELKAKGPR…YSFESLPQKI (565 aa). Position 20 is a phosphoserine (Ser-20). The LXXL motif 1 motif lies at 55 to 59; that stretch reads LDGLL. Position 81 is a phosphoserine (Ser-81). Positions 88–103 are enriched in low complexity; it reads SRAEATRGAGGSSSSP. Residues 115–119 carry the LXXL motif 2 motif; it reads LDTLL. A phosphoserine mark is found at Ser-130 and Ser-162. Residues 165–304 are mediates transcriptional transrepression; sequence MSRSGGKAGD…LATTVMDFIH (140 aa). The Nuclear localization signal signature appears at 183 to 187; the sequence is KVLPQ. Phosphoserine is present on residues Ser-190 and Ser-213. Over residues 220–231 the composition is skewed to acidic residues; the sequence is EVEEEDGSESED. Positions 232–254 are enriched in low complexity; the sequence is SAGPLLKGKPRALGGAAAGGAAA. Ser-293 is subject to Phosphoserine; by MAPK1. A compositionally biased stretch (low complexity) spans 334 to 349; the sequence is AASAFAPPRSSPSASS. Residues 334-356 are disordered; that stretch reads AASAFAPPRSSPSASSTPVAVGD. At Ser-344 the chain carries Phosphoserine; by MAPK. Lys-387 is covalently cross-linked (Glycyl lysine isopeptide (Lys-Gly) (interchain with G-Cter in SUMO); alternate). Lys-387 is covalently cross-linked (Glycyl lysine isopeptide (Lys-Gly) (interchain with G-Cter in ubiquitin); alternate). Disordered regions lie at residues 414-451 and 468-499; these read PDFP…SSAS and PPQQ…STAA. Residues 417–432 are compositionally biased toward pro residues; the sequence is PLGPPPPLPPRAPPSR. Residues 433 to 451 are compositionally biased toward low complexity; sequence PGEAAVTAAPASASVSSAS. An AF1; mediates transcriptional activation region spans residues 455-545; it reads STLECILYKA…VYPPYLNYLR (91 aa). The span at 470-480 shows a compositional bias: pro residues; the sequence is QQGPFAPPPSK. Lys-530 is covalently cross-linked (Glycyl lysine isopeptide (Lys-Gly) (interchain with G-Cter in SUMO)). NR C4-type zinc fingers lie at residues 566-586 and 602-626; these read CLIC…CGSC and CAGR…LRKC. Residues 566 to 638 constitute a DNA-binding region (nuclear receptor); the sequence is CLICGDEASG…AGMVLGGRKF (73 aa). Ser-675 bears the Phosphoserine mark. The NR LBD domain maps to 678-912; that stretch reads QDIQLIPPLI…EFPEMMSEVI (235 aa). The interval 686–932 is AF2; mediates transcriptional activation; sequence LINLLMSIEP…MVKPLLFHKK (247 aa). Arg-765 contributes to the progesterone binding site.

It belongs to the nuclear hormone receptor family. Interacts with SMARD1 and UNC45A. Interacts with CUEDC2; the interaction promotes ubiquitination, decreases sumoylation, and represses transcriptional activity. Interacts with PIAS3; the interaction promotes sumoylation of PR in a hormone-dependent manner, inhibits DNA-binding, and alters nuclear export. Interacts with SP1; the interaction requires ligand-induced phosphorylation on Ser-344 by ERK1/2-MAPK. Interacts with PRMT2. Interacts with NCOA2 and NCOA1. Interacts with KLF9. Interacts with GTF2B. In terms of processing, phosphorylated on multiple serine sites. Several of these sites are hormone-dependent. Phosphorylation on Ser-293 is highly hormone-dependent and modulates ubiquitination and sumoylation on Lys-387. Phosphorylation on Ser-102 and Ser-344 also requires induction by hormone. Basal phosphorylation on Ser-81, Ser-162 and Ser-190 is increased in response to progesterone and can be phosphorylated in vitro by the CDK2-A1 complex. Phosphorylation at Ser-162 and Ser-293, but not at Ser-190, is impaired during the G(2)/M phase of the cell cycle. Phosphorylation on Ser-344 by ERK1/2 MAPK is required for interaction with SP1. Sumoylation is hormone-dependent and represses transcriptional activity. Sumoylation on all three sites is enhanced by PIAS3. Desumoylated by SENP1. Sumoylation on Lys-387, the main site of sumoylation, is repressed by ubiquitination on the same site, and modulated by phosphorylation at Ser-293. Post-translationally, ubiquitination is hormone-dependent and represses sumoylation on the same site. Promoted by MAPK-mediated phosphorylation on Ser-293. Ubiquitinated by UBR5, leading to its degradation: UBR5 specifically recognizes and binds ligand-bound PGR when it is not associated with coactivators (NCOAs). In presence of NCOAs, the UBR5-degron is not accessible, preventing its ubiquitination and degradation. In terms of processing, palmitoylated by ZDHHC7 and ZDHHC21. Palmitoylation is required for plasma membrane targeting and for rapid intracellular signaling via ERK and AKT kinases and cAMP generation.

It localises to the nucleus. Its subcellular location is the cytoplasm. Functionally, the steroid hormones and their receptors are involved in the regulation of eukaryotic gene expression and affect cellular proliferation and differentiation in target tissues. Transcriptional activator of several progesteron-dependent promoters in a variety of cell types. Involved in activation of SRC-dependent MAPK signaling on hormone stimulation. This Hylobates lar (Lar gibbon) protein is Progesterone receptor (PGR).